Consider the following 130-residue polypeptide: Small ribosomal subunit protein uS9 (130 aa).

The segment at alanine 101 to arginine 130 is disordered. The span at lysine 111–arginine 130 shows a compositional bias: basic residues.

The protein belongs to the universal ribosomal protein uS9 family.

The chain is Small ribosomal subunit protein uS9 from Levilactobacillus brevis (strain ATCC 367 / BCRC 12310 / CIP 105137 / JCM 1170 / LMG 11437 / NCIMB 947 / NCTC 947) (Lactobacillus brevis).